The sequence spans 94 residues: Co-chaperonin GroES (94 aa).

Belongs to the GroES chaperonin family. In terms of assembly, heptamer of 7 subunits arranged in a ring. Interacts with the chaperonin GroEL.

It is found in the cytoplasm. Together with the chaperonin GroEL, plays an essential role in assisting protein folding. The GroEL-GroES system forms a nano-cage that allows encapsulation of the non-native substrate proteins and provides a physical environment optimized to promote and accelerate protein folding. GroES binds to the apical surface of the GroEL ring, thereby capping the opening of the GroEL channel. This chain is Co-chaperonin GroES, found in Clostridium perfringens (strain SM101 / Type A).